Consider the following 132-residue polypeptide: Ribosome-binding factor A (132 aa).

Belongs to the RbfA family. In terms of assembly, monomer. Binds 30S ribosomal subunits, but not 50S ribosomal subunits or 70S ribosomes.

It is found in the cytoplasm. Functionally, one of several proteins that assist in the late maturation steps of the functional core of the 30S ribosomal subunit. Associates with free 30S ribosomal subunits (but not with 30S subunits that are part of 70S ribosomes or polysomes). Required for efficient processing of 16S rRNA. May interact with the 5'-terminal helix region of 16S rRNA. The protein is Ribosome-binding factor A of Xanthomonas campestris pv. campestris (strain 8004).